The primary structure comprises 33 residues: Mu-theraphotoxin-Os1a (33 aa).

Disulfide bonds link Cys2–Cys17, Cys9–Cys22, and Cys16–Cys29. Residue Leu33 is modified to Leucine amide.

Belongs to the neurotoxin 10 (Hwtx-1) family. 14 (Hntx-1) subfamily. In terms of assembly, monomer. Expressed by the venom gland.

The protein resides in the secreted. Its function is as follows. Potently and reversibly inhibits some human voltage-gated sodium channels (Nav1.1/SCN1A (IC(50)=72.0 nM), Nav1.2/SCN2A (IC(50)=75.5 nM), Nav1.6/SCN8A (IC(50)=115.0 nM), Nav1.7/SCN9A (IC(50)=52.7-129.5 nM), Nav1.3/SCN3A (IC(50)=306.6 nM)). The hNav1.7/SCN9A channel inhibition occurs without any change in steady-state inactivation- and conductance-voltage relationships. On adult mouse DRG neurons, this toxin is approximately 1000-fold more efficient to inhibit tetrodotoxin (TTX)-sensitive than TTX-resistant sodium currents. In vivo, this toxin exhibits analgesic effects in mice pain models. This is Mu-theraphotoxin-Os1a from Omothymus schioedtei (Malaysian earth tiger tarantula).